We begin with the raw amino-acid sequence, 262 residues long: 4-hydroxy-tetrahydrodipicolinate reductase (262 aa).

9–14 (GCLGRM) provides a ligand contact to NAD(+). R36 contacts NADP(+). NAD(+) is bound by residues 100 to 102 (GTT) and 121 to 124 (SANM). H154 serves as the catalytic Proton donor/acceptor. H155 serves as a coordination point for (S)-2,3,4,5-tetrahydrodipicolinate. The Proton donor role is filled by K158. 164 to 165 (GT) contributes to the (S)-2,3,4,5-tetrahydrodipicolinate binding site.

The protein belongs to the DapB family.

It is found in the cytoplasm. The enzyme catalyses (S)-2,3,4,5-tetrahydrodipicolinate + NAD(+) + H2O = (2S,4S)-4-hydroxy-2,3,4,5-tetrahydrodipicolinate + NADH + H(+). The catalysed reaction is (S)-2,3,4,5-tetrahydrodipicolinate + NADP(+) + H2O = (2S,4S)-4-hydroxy-2,3,4,5-tetrahydrodipicolinate + NADPH + H(+). The protein operates within amino-acid biosynthesis; L-lysine biosynthesis via DAP pathway; (S)-tetrahydrodipicolinate from L-aspartate: step 4/4. In terms of biological role, catalyzes the conversion of 4-hydroxy-tetrahydrodipicolinate (HTPA) to tetrahydrodipicolinate. The polypeptide is 4-hydroxy-tetrahydrodipicolinate reductase (Wolbachia pipientis subsp. Culex pipiens (strain wPip)).